The primary structure comprises 313 residues: Flagellin (313 aa).

2 coiled-coil regions span residues 5–33 and 97–117; these read INTNDSALLAQNNLTKSKGILGSAIERLS and VQSENGSNSKSDLDSIQKEVT. 4 repeat units span residues 179–197, 199–217, 255–259, and 262–266. The tract at residues 179–217 is 2 X 19 AA approximate tandem repeats; it reads KEAVAAKPAVPAQPAVPADPKNGVAAKPAVPAQPEVKAQ. Residues 190–199 show a composition bias toward low complexity; it reads AQPAVPADPK. The tract at residues 190–211 is disordered; that stretch reads AQPAVPADPKNGVAAKPAVPAQ. A coiled-coil region spans residues 252–298; it reads ESTVNNLNNTVNNLSAARSRIEDADYAVEVSNMSRGQILQQAGTSVL. The segment at 255–266 is 2 X 5 AA approximate repeats of V-N-N-L-N; sequence VNNLNNTVNNLS.

The protein belongs to the bacterial flagellin family.

The protein resides in the secreted. It localises to the bacterial flagellum. Flagellin is the subunit protein which polymerizes to form the filaments of bacterial flagella. This Xenorhabdus nematophila (Achromobacter nematophilus) protein is Flagellin (fliC).